A 1682-amino-acid polypeptide reads, in one-letter code: Calmodulin-binding transcription activator 1 (1682 aa).

Residues 63–188 (KCSSLPKERH…YLNVPAIEDC (126 aa)) constitute a DNA-binding region (CG-1). The Nuclear localization signal motif lies at 112 to 119 (RKKVKYRK). 2 disordered regions span residues 284-375 (RIIS…MVDS) and 599-622 (SSFS…FLQD). Positions 302–327 (EVQHNDVSEGKHEPSHGRSTSREKRN) are enriched in basic and acidic residues. 2 stretches are compositionally biased toward polar residues: residues 337-367 (HQNS…SGLN) and 599-618 (SSFS…SPSF). The region spanning 877 to 955 (DYSPEWSYPE…ISNSVVFEYK (79 aa)) is the IPT/TIG domain. A disordered region spans residues 992–1020 (MAEMTGSQQHKQASGGGGSGSGSGSGAGG). The span at 1005 to 1020 (SGGGGSGSGSGSGAGG) shows a compositional bias: gly residues. ANK repeat units follow at residues 1066 to 1095 (RGMT…KHAD), 1111 to 1141 (FSCT…AISI), and 1145 to 1174 (LGRL…DEQA). Disordered regions lie at residues 1217-1249 (ASTN…KKHK) and 1267-1318 (LSLE…SASQ). A compositionally biased stretch (polar residues) spans 1268-1291 (SLEQPNIRKQSPRSKQPSPETISP). A compositionally biased stretch (low complexity) spans 1308 to 1318 (ETAASQASASQ). 3 IQ domains span residues 1549-1585 (QEVA…AAIL), 1586-1608 (IQSK…AAVL), and 1609-1631 (IQNF…TAVI).

This sequence belongs to the CAMTA family. May interact with calmodulin.

The protein localises to the nucleus. The protein resides in the cytoplasm. Transcriptional activator. This Mus musculus (Mouse) protein is Calmodulin-binding transcription activator 1.